Consider the following 361-residue polypeptide: MSAIALYLEINKLRLKIDEPMQLAIWPQLFPLLCDEHQSVQLNTDVLINFMMHVARKSQNTILNNNAAIASQYAAGNADVVAAPASAQPTPRPVINLFARANAAAPAQPSEELINMRRYRNAARKLIHHYSLNSTSSTEYKISDVVMTMIFLLRSEKYHSLFKLLETTFDDYTCRPQMTQVQTDTLLDAVRSLLEMPSTTIDLTTVDIMRSSFARCFNSPIMRYAKIVLLQNVALQRDKRTTLEELLIERGEKIQMLQPQQYINSGTEIPFCDDAEFLNRLLKHIDPYPLSRMYYNAANTMFYTTMENYAVSNCKFNIEDYNNIFKVMENIRKHSNKNSNDQDELNIYLGVQSSNAKRKKY.

Positions 32–36 (LLCDE) are LXCXE motif. The Nuclear localization signal signature appears at 357–360 (KRKK).

It belongs to the baculoviridae C42 protein family. In terms of assembly, forms a complex with proteins E27 and p78/83. The interaction with p78/83 mediates nuclear translocation of P78/83. Interacts with protein Ac102. Interacts with IE0.

The protein localises to the host nucleus. It is found in the virion. Functionally, plays a role in host nuclear actin polymerization by recruiting p78/73 protein that is capable of activating an actin-related protein 2/3 complex to initiate nuclear actin polymerization. This chain is Protein C42, found in Lepidoptera (butterflies and moths).